Consider the following 91-residue polypeptide: Small ribosomal subunit protein bS16 (91 aa).

It belongs to the bacterial ribosomal protein bS16 family.

The sequence is that of Small ribosomal subunit protein bS16 from Streptococcus mutans serotype c (strain ATCC 700610 / UA159).